Here is a 344-residue protein sequence, read N- to C-terminus: Dihydroorotate dehydrogenase (quinone) (344 aa).

FMN-binding positions include 61–65 (AGLDK) and threonine 85. Lysine 65 is a substrate binding site. 110 to 114 (NRMGF) serves as a coordination point for substrate. FMN contacts are provided by asparagine 138 and asparagine 171. Asparagine 171 is a binding site for substrate. Serine 174 acts as the Nucleophile in catalysis. Asparagine 176 serves as a coordination point for substrate. Residues lysine 216 and threonine 244 each contribute to the FMN site. 245-246 (NT) is a substrate binding site. Residues glycine 267, glycine 296, and 317-318 (YS) each bind FMN.

Belongs to the dihydroorotate dehydrogenase family. Type 2 subfamily. Monomer. Requires FMN as cofactor.

The protein resides in the cell membrane. The catalysed reaction is (S)-dihydroorotate + a quinone = orotate + a quinol. It functions in the pathway pyrimidine metabolism; UMP biosynthesis via de novo pathway; orotate from (S)-dihydroorotate (quinone route): step 1/1. In terms of biological role, catalyzes the conversion of dihydroorotate to orotate with quinone as electron acceptor. This is Dihydroorotate dehydrogenase (quinone) from Psychrobacter cryohalolentis (strain ATCC BAA-1226 / DSM 17306 / VKM B-2378 / K5).